A 279-amino-acid polypeptide reads, in one-letter code: MGIRKYKPTTPGRRGSSVADFTEITRSTPEKSLVRPLPKKGGRNNTGKITTRHKGGGHKRQYRLIDFRRHDKDGVDARVAEIEYDPNRTARIALLHYVDGTKRYIIAPNKLSQGDFVEAGANADIKPGNNLPLRNIPVGTVIHAVELRPGGGAKMGRSAGASIQLVAKEGRFAQLRLPSGEIRNVDVRCRATVGEVGNAEQSNINWGKAGRMRWKGVRPTVRGVAMNPVDHPHGGGEGKTSGGRHPVNPNGKREGRTRRPNKESDKLIVRRRRTGKNKR.

2 disordered regions span residues 1 to 59 (MGIR…GGHK) and 224 to 279 (VAMN…KNKR). Composition is skewed to basic residues over residues 50 to 59 (TTRHKGGGHK) and 269 to 279 (VRRRRTGKNKR).

It belongs to the universal ribosomal protein uL2 family. As to quaternary structure, part of the 50S ribosomal subunit. Forms a bridge to the 30S subunit in the 70S ribosome.

In terms of biological role, one of the primary rRNA binding proteins. Required for association of the 30S and 50S subunits to form the 70S ribosome, for tRNA binding and peptide bond formation. It has been suggested to have peptidyltransferase activity; this is somewhat controversial. Makes several contacts with the 16S rRNA in the 70S ribosome. In Arthrobacter sp. (strain FB24), this protein is Large ribosomal subunit protein uL2.